The chain runs to 475 residues: Ribulose bisphosphate carboxylase large chain (475 aa).

The propeptide occupies 1–2 (MS). Pro3 is modified (N-acetylproline). Lys14 bears the N6,N6,N6-trimethyllysine mark. Substrate is bound by residues Asn123 and Thr173. The active-site Proton acceptor is Lys175. Lys177 serves as a coordination point for substrate. Residues Lys201, Asp203, and Glu204 each contribute to the Mg(2+) site. The residue at position 201 (Lys201) is an N6-carboxylysine. The Proton acceptor role is filled by His294. Residues Arg295, His327, and Ser379 each contribute to the substrate site.

It belongs to the RuBisCO large chain family. Type I subfamily. In terms of assembly, heterohexadecamer of 8 large chains and 8 small chains; disulfide-linked. The disulfide link is formed within the large subunit homodimers. The cofactor is Mg(2+). The disulfide bond which can form in the large chain dimeric partners within the hexadecamer appears to be associated with oxidative stress and protein turnover.

The protein resides in the plastid. It is found in the chloroplast. It catalyses the reaction 2 (2R)-3-phosphoglycerate + 2 H(+) = D-ribulose 1,5-bisphosphate + CO2 + H2O. The enzyme catalyses D-ribulose 1,5-bisphosphate + O2 = 2-phosphoglycolate + (2R)-3-phosphoglycerate + 2 H(+). RuBisCO catalyzes two reactions: the carboxylation of D-ribulose 1,5-bisphosphate, the primary event in carbon dioxide fixation, as well as the oxidative fragmentation of the pentose substrate in the photorespiration process. Both reactions occur simultaneously and in competition at the same active site. This chain is Ribulose bisphosphate carboxylase large chain, found in Clarkia xantiana (Gunsight clarkia).